We begin with the raw amino-acid sequence, 329 residues long: MAKAPMRVAVTGAAGQIGYSLLFRIANGDLLGKDQPVILQLLEIADEKAQKALKGVIMEIDDCAFPLLAGVTAHSDPMTAFKDADVALLVGARPRGPGMERKDLLEANAQIFTVQGKALDAVASRNVKVLVVGNPANTNAYIAMKSAPNLPAKNFTAMLRLDHNRALSQIAAKISKPVTSIEKLTVWGNHSPTMYPDYRFATADGKSVKEAINDEVWNKDVFLPTVGKRGAAIIDARGVSSAASAANAAIDHVRDWVLGTNGKWVTMGIPSDGSYGIPKDTIFGFPVTVENGEYKIVQGLEIDAFSQERINLTLKELLEEREGVKHLLG.

12 to 18 contacts NAD(+); the sequence is GAAGQIG. 2 residues coordinate substrate: Arg95 and Arg101. Residues Asn108, Gln115, and 132–134 each bind NAD(+); that span reads VGN. Positions 134 and 165 each coordinate substrate. His190 acts as the Proton acceptor in catalysis.

The protein belongs to the LDH/MDH superfamily. MDH type 2 family.

The enzyme catalyses (S)-malate + NAD(+) = oxaloacetate + NADH + H(+). In terms of biological role, catalyzes the reversible oxidation of malate to oxaloacetate. The chain is Malate dehydrogenase from Janthinobacterium sp. (strain Marseille) (Minibacterium massiliensis).